The primary structure comprises 414 residues: Serine/threonine transporter SstT (414 aa).

Helical transmembrane passes span Gly16 to Ser36, Leu46 to Val66, Ile84 to Phe104, Ala143 to Leu163, Ala180 to Val200, Leu219 to Phe239, Met300 to Val320, and Val332 to Ile352.

This sequence belongs to the dicarboxylate/amino acid:cation symporter (DAACS) (TC 2.A.23) family.

It is found in the cell inner membrane. The catalysed reaction is L-serine(in) + Na(+)(in) = L-serine(out) + Na(+)(out). It catalyses the reaction L-threonine(in) + Na(+)(in) = L-threonine(out) + Na(+)(out). Functionally, involved in the import of serine and threonine into the cell, with the concomitant import of sodium (symport system). The chain is Serine/threonine transporter SstT from Salmonella agona (strain SL483).